Here is a 146-residue protein sequence, read N- to C-terminus: Hemoglobin subunit beta (146 aa).

A Globin domain is found at 2–146 (HWSAEEKQLI…VAHALARKYH (145 aa)). Histidine 63 and histidine 92 together coordinate heme b.

It belongs to the globin family. In terms of assembly, heterotetramer of two alpha chains and two beta chains. As to expression, red blood cells.

In terms of biological role, involved in oxygen transport from the lung to the various peripheral tissues. The sequence is that of Hemoglobin subunit beta (HBB) from Psittacula krameri (Rose-ringed parakeet).